Consider the following 340-residue polypeptide: Holliday junction branch migration complex subunit RuvB (340 aa).

A large ATPase domain (RuvB-L) region spans residues 1–181 (MDRIVEIEKA…FGMQFRLNFY (181 aa)). ATP is bound by residues Leu-20, Arg-21, Gly-62, Lys-65, Thr-66, Thr-67, 128-130 (EDF), Arg-171, Tyr-181, and Arg-218. Thr-66 is a Mg(2+) binding site. The small ATPAse domain (RuvB-S) stretch occupies residues 182–252 (TSDELAKIVQ…RAKSSLDALG (71 aa)). A head domain (RuvB-H) region spans residues 255-340 (DLGFDEMDLK…TQKGLFDEDQ (86 aa)). 2 residues coordinate DNA: Arg-309 and Arg-314.

It belongs to the RuvB family. In terms of assembly, homohexamer. Forms an RuvA(8)-RuvB(12)-Holliday junction (HJ) complex. HJ DNA is sandwiched between 2 RuvA tetramers; dsDNA enters through RuvA and exits via RuvB. An RuvB hexamer assembles on each DNA strand where it exits the tetramer. Each RuvB hexamer is contacted by two RuvA subunits (via domain III) on 2 adjacent RuvB subunits; this complex drives branch migration. In the full resolvosome a probable DNA-RuvA(4)-RuvB(12)-RuvC(2) complex forms which resolves the HJ.

The protein resides in the cytoplasm. The enzyme catalyses ATP + H2O = ADP + phosphate + H(+). The RuvA-RuvB-RuvC complex processes Holliday junction (HJ) DNA during genetic recombination and DNA repair, while the RuvA-RuvB complex plays an important role in the rescue of blocked DNA replication forks via replication fork reversal (RFR). RuvA specifically binds to HJ cruciform DNA, conferring on it an open structure. The RuvB hexamer acts as an ATP-dependent pump, pulling dsDNA into and through the RuvAB complex. RuvB forms 2 homohexamers on either side of HJ DNA bound by 1 or 2 RuvA tetramers; 4 subunits per hexamer contact DNA at a time. Coordinated motions by a converter formed by DNA-disengaged RuvB subunits stimulates ATP hydrolysis and nucleotide exchange. Immobilization of the converter enables RuvB to convert the ATP-contained energy into a lever motion, pulling 2 nucleotides of DNA out of the RuvA tetramer per ATP hydrolyzed, thus driving DNA branch migration. The RuvB motors rotate together with the DNA substrate, which together with the progressing nucleotide cycle form the mechanistic basis for DNA recombination by continuous HJ branch migration. Branch migration allows RuvC to scan DNA until it finds its consensus sequence, where it cleaves and resolves cruciform DNA. The sequence is that of Holliday junction branch migration complex subunit RuvB from Campylobacter hominis (strain ATCC BAA-381 / DSM 21671 / CCUG 45161 / LMG 19568 / NCTC 13146 / CH001A).